Consider the following 136-residue polypeptide: Putative pre-16S rRNA nuclease (136 aa).

The protein belongs to the YqgF nuclease family.

The protein resides in the cytoplasm. Functionally, could be a nuclease involved in processing of the 5'-end of pre-16S rRNA. This Francisella tularensis subsp. novicida (strain U112) protein is Putative pre-16S rRNA nuclease.